The following is a 220-amino-acid chain: uncharacterized protein (220 aa).

The next 4 membrane-spanning stretches (helical) occupy residues 9-29 (LWIT…GSTQ), 54-74 (YAVH…FLAV), 105-125 (VQGI…IHLW), and 177-197 (VLAV…VIEM).

It is found in the cell membrane. This is an uncharacterized protein from Sinorhizobium fredii (strain NBRC 101917 / NGR234).